Here is a 225-residue protein sequence, read N- to C-terminus: Protein-L-isoaspartate O-methyltransferase 2 (225 aa).

Ser73 is an active-site residue.

It belongs to the methyltransferase superfamily. L-isoaspartyl/D-aspartyl protein methyltransferase family.

It localises to the cytoplasm. It carries out the reaction [protein]-L-isoaspartate + S-adenosyl-L-methionine = [protein]-L-isoaspartate alpha-methyl ester + S-adenosyl-L-homocysteine. Functionally, catalyzes the methyl esterification of L-isoaspartyl residues in peptides and proteins that result from spontaneous decomposition of normal L-aspartyl and L-asparaginyl residues. It plays a role in the repair and/or degradation of damaged proteins. This is Protein-L-isoaspartate O-methyltransferase 2 from Pelobacter propionicus (strain DSM 2379 / NBRC 103807 / OttBd1).